Consider the following 208-residue polypeptide: ATP-dependent Clp protease proteolytic subunit (208 aa).

Catalysis depends on Ser98, which acts as the Nucleophile. The active site involves His123.

It belongs to the peptidase S14 family. Fourteen ClpP subunits assemble into 2 heptameric rings which stack back to back to give a disk-like structure with a central cavity, resembling the structure of eukaryotic proteasomes.

The protein resides in the cytoplasm. The catalysed reaction is Hydrolysis of proteins to small peptides in the presence of ATP and magnesium. alpha-casein is the usual test substrate. In the absence of ATP, only oligopeptides shorter than five residues are hydrolyzed (such as succinyl-Leu-Tyr-|-NHMec, and Leu-Tyr-Leu-|-Tyr-Trp, in which cleavage of the -Tyr-|-Leu- and -Tyr-|-Trp bonds also occurs).. Functionally, cleaves peptides in various proteins in a process that requires ATP hydrolysis. Has a chymotrypsin-like activity. Plays a major role in the degradation of misfolded proteins. This chain is ATP-dependent Clp protease proteolytic subunit, found in Wolbachia pipientis subsp. Culex pipiens (strain wPip).